The following is a 318-amino-acid chain: Aspartate carbamoyltransferase catalytic subunit (318 aa).

Positions 58 and 59 each coordinate carbamoyl phosphate. An L-aspartate-binding site is contributed by Lys86. The carbamoyl phosphate site is built by Arg108, His141, and Gln144. Residues Arg174 and Arg226 each coordinate L-aspartate. Residues Gly270 and Pro271 each contribute to the carbamoyl phosphate site.

Belongs to the aspartate/ornithine carbamoyltransferase superfamily. ATCase family. Heterododecamer (2C3:3R2) of six catalytic PyrB chains organized as two trimers (C3), and six regulatory PyrI chains organized as three dimers (R2).

It catalyses the reaction carbamoyl phosphate + L-aspartate = N-carbamoyl-L-aspartate + phosphate + H(+). Its pathway is pyrimidine metabolism; UMP biosynthesis via de novo pathway; (S)-dihydroorotate from bicarbonate: step 2/3. Catalyzes the condensation of carbamoyl phosphate and aspartate to form carbamoyl aspartate and inorganic phosphate, the committed step in the de novo pyrimidine nucleotide biosynthesis pathway. This is Aspartate carbamoyltransferase catalytic subunit from Lactobacillus delbrueckii subsp. bulgaricus (strain ATCC 11842 / DSM 20081 / BCRC 10696 / JCM 1002 / NBRC 13953 / NCIMB 11778 / NCTC 12712 / WDCM 00102 / Lb 14).